We begin with the raw amino-acid sequence, 452 residues long: Translation initiation factor eIF2B subunit gamma (452 aa).

Residue Met1 is modified to N-acetylmethionine. The residue at position 260 (Ser260) is a Phosphoserine.

This sequence belongs to the eIF-2B gamma/epsilon subunits family. Component of the translation initiation factor 2B (eIF2B) complex which is a heterodecamer of two sets of five different subunits: alpha, beta, gamma, delta and epsilon. Subunits alpha, beta and delta comprise a regulatory subcomplex and subunits epsilon and gamma comprise a catalytic subcomplex. Within the complex, the hexameric regulatory complex resides at the center, with the two heterodimeric catalytic subcomplexes bound on opposite sides.

Its subcellular location is the cytoplasm. The protein localises to the cytosol. Its activity is regulated as follows. Activated by the chemical integrated stress response (ISR) inhibitor ISRIB which stimulates guanine nucleotide exchange factor activity for both phosphorylated and unphosphorylated eIF2. Functionally, acts as a component of the translation initiation factor 2B (eIF2B) complex, which catalyzes the exchange of GDP for GTP on the eukaryotic initiation factor 2 (eIF2) complex gamma subunit. Its guanine nucleotide exchange factor activity is repressed when bound to eIF2 complex phosphorylated on the alpha subunit, thereby limiting the amount of methionyl-initiator methionine tRNA available to the ribosome and consequently global translation is repressed. The protein is Translation initiation factor eIF2B subunit gamma (EIF2B3) of Macaca fascicularis (Crab-eating macaque).